A 342-amino-acid chain; its full sequence is Trans-3-hydroxy-L-proline dehydratase (342 aa).

Serine 90 functions as the Proton acceptor in the catalytic mechanism. Residues glycine 91–serine 92, aspartate 252, and glycine 257–threonine 258 each bind substrate.

Belongs to the proline racemase family.

It carries out the reaction trans-3-hydroxy-L-proline = 1-pyrroline-2-carboxylate + H2O. Its function is as follows. Catalyzes the dehydration of trans-3-hydroxy-L-proline (t3LHyp) to Delta(1)-pyrroline-2-carboxylate (Pyr2C). Is likely involved in a degradation pathway that converts t3LHyp to L-proline. Displays neither proline racemase activity nor 4-hydroxyproline 2-epimerase activity. This chain is Trans-3-hydroxy-L-proline dehydratase, found in Allorhizobium ampelinum (strain ATCC BAA-846 / DSM 112012 / S4) (Agrobacterium vitis (strain S4)).